Consider the following 283-residue polypeptide: Accumulation of dyads protein 2 (283 aa).

The tract at residues methionine 1 to serine 41 is disordered. The Cytoplasmic segment spans residues methionine 1–asparagine 89. A helical membrane pass occupies residues proline 90–alanine 110. Over arginine 111 to valine 120 the chain is Extracellular. A helical membrane pass occupies residues valine 121–isoleucine 141. Residues alanine 142–alanine 151 are Cytoplasmic-facing. Residues leucine 152 to isoleucine 172 traverse the membrane as a helical segment. Residues leucine 173 to asparagine 185 lie on the Extracellular side of the membrane. A helical membrane pass occupies residues alanine 186–methionine 206. Residues lysine 207–serine 208 are Cytoplasmic-facing. A helical transmembrane segment spans residues threonine 209–glycine 229. Over histidine 230 to alanine 240 the chain is Extracellular. Residues glycine 241–alanine 261 traverse the membrane as a helical segment. Topologically, residues threonine 262–phenylalanine 283 are cytoplasmic.

Belongs to the acetate uptake transporter (AceTr) (TC 2.A.96) family.

It localises to the cell membrane. The protein localises to the vacuole membrane. In terms of biological role, transporter protein required for ammonia export and acetate uptake and resistance. Necessary for up-regulation and down-regulation of meiotic plaque (MP) component levels in a dependency on external acetate. Has a role in ascus formation. This is Accumulation of dyads protein 2 (ADY2) from Saccharomyces cerevisiae (strain ATCC 204508 / S288c) (Baker's yeast).